A 252-amino-acid polypeptide reads, in one-letter code: Hydroxyacylglutathione hydrolase (252 aa).

Residues His-52, His-54, Asp-56, His-57, His-107, Asp-128, and His-166 each coordinate Zn(2+).

The protein belongs to the metallo-beta-lactamase superfamily. Glyoxalase II family. In terms of assembly, monomer. Requires Zn(2+) as cofactor.

It carries out the reaction an S-(2-hydroxyacyl)glutathione + H2O = a 2-hydroxy carboxylate + glutathione + H(+). It functions in the pathway secondary metabolite metabolism; methylglyoxal degradation; (R)-lactate from methylglyoxal: step 2/2. In terms of biological role, thiolesterase that catalyzes the hydrolysis of S-D-lactoyl-glutathione to form glutathione and D-lactic acid. This chain is Hydroxyacylglutathione hydrolase, found in Neisseria meningitidis serogroup C (strain 053442).